The sequence spans 640 residues: MAPKPPSGTSSRAWDAVTPALSEWVLEAMSSMGFTRMTPVQASAIPLFMAHKDVVVEAVTGSGKTLSFLIPVVEKLLRLEEPIKKHHIGAIIISPTRELASQIYNVLSSLLAFHPPSAAAINPSEDDDAPRPKFPSSTLKVVPQLLLGGSTTPAEDLSTFLKRSPNVLVSTPGRLLELLSSPHVHCPQSSFEMLVLDEADRLLDLGFKETLQNILRRLPKQRRTGLFSASVSEAVDQIVRVGLRNPVKVMVKVKGGSGVDDKRTPASLQMTYLTTPPSHKFAALKRILSSVQPTPLKTIFFVSTCSGVDYLSAILPLLLGDDFLLIPLHGKHQANVRQKNFNRFINSHDPAILLTTDVAARGLDIPSVDLVVQIDPPSDPKSFIHRCGRAGRAGRRGLSVVLLHPGREEDYVSFLEVRKTPVVPFSPLITFSDADAAAATATARKAVLADRALHDRGQKAFVSWFRSYSKHQASSIFRVSDLDWEALGKAWGLLKLPKMPELRNFTGDKTLGVSLDWNNYAYKDKQREKRRKELLQEAAESGATQSTSNKRRATESVAWSQQAESKNKKLKRREQKKSKHEKARWEKMTEEEKQKVLETEKMVEELRKKNEEERRLRRAAAKAAGAKADGDDEEEFQGFD.

The short motif at 14–42 is the Q motif element; it reads WDAVTPALSEWVLEAMSSMGFTRMTPVQA. The Helicase ATP-binding domain occupies 45-249; that stretch reads IPLFMAHKDV…RVGLRNPVKV (205 aa). 58-65 contacts ATP; it reads AVTGSGKT. Positions 197 to 200 match the DEAD box motif; sequence DEAD. The region spanning 283–437 is the Helicase C-terminal domain; the sequence is ALKRILSSVQ…LITFSDADAA (155 aa). Residues 521–629 are a coiled coil; that stretch reads AYKDKQREKR…AAKAAGAKAD (109 aa). Disordered stretches follow at residues 531–595 and 607–640; these read RKEL…EKQK and RKKN…QGFD. Over residues 568 to 582 the composition is skewed to basic residues; the sequence is KKLKRREQKKSKHEK. Residues 583–595 show a composition bias toward basic and acidic residues; that stretch reads ARWEKMTEEEKQK. The segment covering 630 to 640 has biased composition (acidic residues); that stretch reads GDDEEEFQGFD.

Belongs to the DEAD box helicase family. DDX55/SPB4 subfamily. In terms of assembly, component of pre-60S ribosomal complexes.

The protein resides in the nucleus. Its subcellular location is the nucleolus. The enzyme catalyses ATP + H2O = ADP + phosphate + H(+). ATP-binding RNA helicase involved in the biogenesis of 60S ribosomal subunits. Binds 90S pre-ribosomal particles and dissociates from pre-60S ribosomal particles after processing of 27SB pre-rRNA. Required for the normal formation of 18S rRNA through the processing of pre-rRNAs at sites A0, A1 and A2, and the normal formation of 25S and 5.8S rRNAs through the processing of pre-rRNAs at sites C1 and C2. This chain is ATP-dependent rRNA helicase spb4, found in Neosartorya fischeri (strain ATCC 1020 / DSM 3700 / CBS 544.65 / FGSC A1164 / JCM 1740 / NRRL 181 / WB 181) (Aspergillus fischerianus).